We begin with the raw amino-acid sequence, 75 residues long: Small ribosomal subunit protein bS18c (75 aa).

It belongs to the bacterial ribosomal protein bS18 family. As to quaternary structure, part of the 30S ribosomal subunit.

It is found in the plastid. It localises to the chloroplast. This chain is Small ribosomal subunit protein bS18c (rps18), found in Marchantia polymorpha (Common liverwort).